Here is a 480-residue protein sequence, read N- to C-terminus: Glycogen synthase (480 aa).

Residue Lys15 coordinates ADP-alpha-D-glucose.

This sequence belongs to the glycosyltransferase 1 family. Bacterial/plant glycogen synthase subfamily.

It catalyses the reaction [(1-&gt;4)-alpha-D-glucosyl](n) + ADP-alpha-D-glucose = [(1-&gt;4)-alpha-D-glucosyl](n+1) + ADP + H(+). It functions in the pathway glycan biosynthesis; glycogen biosynthesis. In terms of biological role, synthesizes alpha-1,4-glucan chains using ADP-glucose. In Pasteurella multocida (strain Pm70), this protein is Glycogen synthase.